Reading from the N-terminus, the 209-residue chain is ADP-ribose pyrophosphatase (209 aa).

Residues 28-29, 51-52, R56, and R79 each bind substrate; these read FF and RE. One can recognise a Nudix hydrolase domain in the interval 55–193; that stretch reads ERGHAAVLLP…KIDNAASVIA (139 aa). A96 is a binding site for Mg(2+). A Nudix box motif is present at residues 97–118; the sequence is GMIEEGESVEDVARREAIEEAG. Residue M98 participates in substrate binding. 2 residues coordinate Mg(2+): E112 and E116. Residues 133–135 and E139 each bind substrate; that span reads SPG. The active-site Proton acceptor is the E162. E164 lines the Mg(2+) pocket.

This sequence belongs to the Nudix hydrolase family. NudF subfamily. In terms of assembly, homodimer. The cofactor is Mg(2+).

It carries out the reaction ADP-D-ribose + H2O = D-ribose 5-phosphate + AMP + 2 H(+). Its activity is regulated as follows. Inhibited by phosphorylated compounds such as AMP, ADP, ATP, 3-phosphoglyceric acid and PPi. Not inhibited by orthophosphate. Activity is high in cells grown in low glucose concentrations and decreases dramatically as glucose concentration increases. Acts on ADP-mannose and ADP-glucose as well as ADP-ribose. Prevents glycogen biosynthesis. The reaction catalyzed by this enzyme is a limiting step of the gluconeogenic process. The polypeptide is ADP-ribose pyrophosphatase (nudF) (Escherichia coli O157:H7).